A 289-amino-acid polypeptide reads, in one-letter code: ATP phosphoribosyltransferase (289 aa).

This sequence belongs to the ATP phosphoribosyltransferase family. Long subfamily. Mg(2+) serves as cofactor.

The protein resides in the cytoplasm. It carries out the reaction 1-(5-phospho-beta-D-ribosyl)-ATP + diphosphate = 5-phospho-alpha-D-ribose 1-diphosphate + ATP. The protein operates within amino-acid biosynthesis; L-histidine biosynthesis; L-histidine from 5-phospho-alpha-D-ribose 1-diphosphate: step 1/9. Its activity is regulated as follows. Feedback inhibited by histidine. Functionally, catalyzes the condensation of ATP and 5-phosphoribose 1-diphosphate to form N'-(5'-phosphoribosyl)-ATP (PR-ATP). Has a crucial role in the pathway because the rate of histidine biosynthesis seems to be controlled primarily by regulation of HisG enzymatic activity. The sequence is that of ATP phosphoribosyltransferase from Solibacter usitatus (strain Ellin6076).